The chain runs to 312 residues: tRNA-dihydrouridine(16) synthase (312 aa).

Residues Pro7 to Glu9 and Gln68 contribute to the FMN site. Cys98 acts as the Proton donor in catalysis. FMN-binding positions include Lys139, Asn200 to Glu202, and Gly224 to Arg225.

This sequence belongs to the Dus family. DusC subfamily. It depends on FMN as a cofactor.

The catalysed reaction is 5,6-dihydrouridine(16) in tRNA + NADP(+) = uridine(16) in tRNA + NADPH + H(+). It carries out the reaction 5,6-dihydrouridine(16) in tRNA + NAD(+) = uridine(16) in tRNA + NADH + H(+). In terms of biological role, catalyzes the synthesis of 5,6-dihydrouridine (D), a modified base found in the D-loop of most tRNAs, via the reduction of the C5-C6 double bond in target uridines. Specifically modifies U16 in tRNAs. This chain is tRNA-dihydrouridine(16) synthase, found in Yersinia pestis.